A 2114-amino-acid polypeptide reads, in one-letter code: Protein CELLULOSE SYNTHASE INTERACTIVE 2 (2114 aa).

ARM repeat units lie at residues Thr2–Leu42, Lys46–Lys87, Lys89–Leu128, Asn135–Gly177, Asp180–Arg219, Thr222–Ser262, Glu265–Thr305, Gly354–Gly394, Val396–Lys435, Glu479–Cys519, Glu522–Lys561, Ala563–Ala595, Glu601–Ser640, Lys643–Asn682, Ala708–Arg750, Ser774–Lys816, His825–Lys865, Leu870–Lys910, Thr914–Pro953, Pro994–Ala1033, Pro1044–Arg1083, Asp1087–Asn1128, Glu1141–Asp1182, Asp1185–Arg1225, Pro1227–Leu1264, Phe1265–Lys1304, Arg1312–Thr1353, Glu1355–Asp1394, Lys1396–Lys1435, Ile1454–Pro1494, Leu1496–Val1525, Leu1526–Glu1564, Gln1566–Val1605, Thr1606–Arg1648, Asn1650–Asp1689, Ser1690–Lys1730, Arg1732–Gln1771, His1772–Met1813, Arg1816–Ser1855, His1857–Thr1898, Pro1901–Gln1940, and Thr1949–Gly1993. The C2 domain maps to Ser1974 to Phe2087.

As to quaternary structure, associates with cellulase synthase (CESA) complexes. Binds to cortical microtubules.

Its subcellular location is the cell membrane. It is found in the cytoplasm. It localises to the cytoskeleton. Its function is as follows. Regulator of the microtubular cytoskeleton. Microtubule-associated protein involved in the association of cellulase synthase (CESA) complexes (CSCs) and cortical microtubules. Promotes dynamics of CSCs in the plasma membrane. Regulates primary cell wall biosynthesis and cellulose microfibrils organization. The polypeptide is Protein CELLULOSE SYNTHASE INTERACTIVE 2 (Arabidopsis thaliana (Mouse-ear cress)).